A 107-amino-acid polypeptide reads, in one-letter code: U1-lycotoxin-Ls1i (107 aa).

A signal peptide spans 1–20; the sequence is MMKVLVVVALLVTLISYSSS. Residues 21-41 constitute a propeptide that is removed on maturation; that stretch reads EGIDDLEADELLSLMANEQTR. Intrachain disulfides connect C44/C59, C51/C68, C58/C86, and C70/C84.

It belongs to the neurotoxin 19 (CSTX) family. 04 (U1-Lctx) subfamily. Expressed by the venom gland.

The protein resides in the secreted. This chain is U1-lycotoxin-Ls1i, found in Lycosa singoriensis (Wolf spider).